A 348-amino-acid polypeptide reads, in one-letter code: tRNA N6-adenosine threonylcarbamoyltransferase (348 aa).

Fe cation contacts are provided by H111 and H115. Residues 134 to 138 (LISGG), D167, G180, and N277 each bind substrate. D305 contacts Fe cation.

The protein belongs to the KAE1 / TsaD family. The cofactor is Fe(2+).

The protein localises to the cytoplasm. It carries out the reaction L-threonylcarbamoyladenylate + adenosine(37) in tRNA = N(6)-L-threonylcarbamoyladenosine(37) in tRNA + AMP + H(+). Required for the formation of a threonylcarbamoyl group on adenosine at position 37 (t(6)A37) in tRNAs that read codons beginning with adenine. Is involved in the transfer of the threonylcarbamoyl moiety of threonylcarbamoyl-AMP (TC-AMP) to the N6 group of A37, together with TsaE and TsaB. TsaD likely plays a direct catalytic role in this reaction. The sequence is that of tRNA N6-adenosine threonylcarbamoyltransferase from Haemophilus ducreyi (strain 35000HP / ATCC 700724).